A 115-amino-acid polypeptide reads, in one-letter code: Nitrogen regulatory protein P-II 2 (115 aa).

Tyr-54 is subject to O-UMP-tyrosine.

Belongs to the P(II) protein family.

Functionally, could be involved in the regulation of nitrogen fixation. This is Nitrogen regulatory protein P-II 2 from Methanothermobacter thermautotrophicus (strain ATCC 29096 / DSM 1053 / JCM 10044 / NBRC 100330 / Delta H) (Methanobacterium thermoautotrophicum).